We begin with the raw amino-acid sequence, 84 residues long: Large ribosomal subunit protein bL31B (84 aa).

Belongs to the bacterial ribosomal protein bL31 family. Type B subfamily. Part of the 50S ribosomal subunit.

In Photorhabdus laumondii subsp. laumondii (strain DSM 15139 / CIP 105565 / TT01) (Photorhabdus luminescens subsp. laumondii), this protein is Large ribosomal subunit protein bL31B.